The primary structure comprises 573 residues: Delta 8-(E)-sphingolipid desaturase (573 aa).

One can recognise a Cytochrome b5 heme-binding domain in the interval 2-77; it reads SRVLSRRDIA…FKIWKIGRID (76 aa). 2 residues coordinate heme: His-37 and His-60. Residues 228 to 248 form a helical membrane-spanning segment; the sequence is LFGISFYLLSLKWFAISAICL. The short motif at 260-264 is the Histidine box-1 element; that stretch reads HDAGH. A helical transmembrane segment spans residues 273 to 293; the sequence is VDNIIGMTVASWIGGLSLGWW. Residues 297-301 carry the Histidine box-2 motif; it reads HDVHH. 3 helical membrane-spanning segments follow: residues 353-372, 393-413, and 422-442; these read YLYY…LSWM, LAEL…KQMP, and VMIS…SHFA. The short motif at 481 to 485 is the Histidine box-3 element; sequence QVIHH.

This sequence belongs to the fatty acid desaturase type 1 family.

It localises to the membrane. It carries out the reaction an N-acylsphing-4-enine + 2 Fe(II)-[cytochrome b5] + O2 + 2 H(+) = a (4E,8E)-4-sphinga-4,8-dienine ceramide + 2 Fe(III)-[cytochrome b5] + 2 H2O. The protein operates within lipid metabolism; sphingolipid metabolism. Delta(8)-fatty-acid desaturase which introduces a double bond at the 8-position in the long-chain base (LCB) of ceramides. Required for the formation of the di-unsaturated sphingoid base (E,E)-sphinga-4,8-dienine during glucosylceramide (GluCer) biosynthesis. The chain is Delta 8-(E)-sphingolipid desaturase from Kluyveromyces lactis (Yeast).